The primary structure comprises 183 residues: ATP synthase subunit delta (183 aa).

It belongs to the ATPase delta chain family. In terms of assembly, F-type ATPases have 2 components, F(1) - the catalytic core - and F(0) - the membrane proton channel. F(1) has five subunits: alpha(3), beta(3), gamma(1), delta(1), epsilon(1). F(0) has three main subunits: a(1), b(2) and c(10-14). The alpha and beta chains form an alternating ring which encloses part of the gamma chain. F(1) is attached to F(0) by a central stalk formed by the gamma and epsilon chains, while a peripheral stalk is formed by the delta and b chains.

It localises to the cell inner membrane. Functionally, f(1)F(0) ATP synthase produces ATP from ADP in the presence of a proton or sodium gradient. F-type ATPases consist of two structural domains, F(1) containing the extramembraneous catalytic core and F(0) containing the membrane proton channel, linked together by a central stalk and a peripheral stalk. During catalysis, ATP synthesis in the catalytic domain of F(1) is coupled via a rotary mechanism of the central stalk subunits to proton translocation. In terms of biological role, this protein is part of the stalk that links CF(0) to CF(1). It either transmits conformational changes from CF(0) to CF(1) or is implicated in proton conduction. The sequence is that of ATP synthase subunit delta from Rickettsia typhi (strain ATCC VR-144 / Wilmington).